A 272-amino-acid chain; its full sequence is Regulatory protein RecX (272 aa).

The protein belongs to the RecX family.

It is found in the cytoplasm. Its function is as follows. Modulates RecA activity. In Staphylococcus saprophyticus subsp. saprophyticus (strain ATCC 15305 / DSM 20229 / NCIMB 8711 / NCTC 7292 / S-41), this protein is Regulatory protein RecX.